Here is a 479-residue protein sequence, read N- to C-terminus: Cysteine--tRNA ligase (479 aa).

Position 28 (cysteine 28) interacts with Zn(2+). Positions 30–40 (PTVYDHAHLGH) match the 'HIGH' region motif. The Zn(2+) site is built by cysteine 207, histidine 232, and glutamate 236. Positions 264-268 (KMSKS) match the 'KMSKS' region motif. Lysine 267 lines the ATP pocket.

The protein belongs to the class-I aminoacyl-tRNA synthetase family. Zn(2+) serves as cofactor.

The protein localises to the cytoplasm. It carries out the reaction tRNA(Cys) + L-cysteine + ATP = L-cysteinyl-tRNA(Cys) + AMP + diphosphate. The chain is Cysteine--tRNA ligase from Methanococcus aeolicus (strain ATCC BAA-1280 / DSM 17508 / OCM 812 / Nankai-3).